We begin with the raw amino-acid sequence, 277 residues long: MNIKHNYISYFQMNGIQIPGISNPEAIIPITGEKKSYKLVLDFNDGAISIIEARYLDSKLHREIQDLSDNDVTILGTEISDGAYDENLDIHCDKCNKFYRPYCRLHPLFKIPDRVLKRDESSNLSFSQQTLPILFRIEESKLPNAGLGVIAEVFIPVGMVFGPYKGRRCQKKTDFYKDGYAWLIKSGDKRFYIDGSDAERSNWLRYINSPRFEDEQNMLAFQTNGKIFYRVIKPIRINQELLVWYGSSYGNEFVESENGNKYKKPAKNPFICVGAQR.

Positions Phe-135 to Gly-246 constitute an SET domain. Position 245 (Tyr-245) interacts with S-adenosyl-L-methionine.

The protein belongs to the class V-like SAM-binding methyltransferase superfamily. As to expression, expressed in the germline. Predominantly expressed in primary spermatocytes. Also expressed in the oocyte-producing germline of hermaphrodites.

Its subcellular location is the nucleus. It catalyses the reaction N(6)-methyl-L-lysyl(4)-[histone H3] + S-adenosyl-L-methionine = N(6),N(6)-dimethyl-L-lysyl(4)-[histone H3] + S-adenosyl-L-homocysteine + H(+). The enzyme catalyses L-lysyl(4)-[histone H3] + S-adenosyl-L-methionine = N(6)-methyl-L-lysyl(4)-[histone H3] + S-adenosyl-L-homocysteine + H(+). Functionally, histone methyltransferase that specifically mono- and di-methylates 'Lys-4' of histone H3 in vitro. Does not tri-methylate 'Lys-4' of histone H3 in vitro. Promotes spermatid development and fertility by positively regulating the transcription of spermatocyte-specific genes in primary spermatocytes. Together with spr-5, required for transgenerational fertility. The chain is Histone-lysine N-methyltransferase set-17 from Caenorhabditis elegans.